Here is a 23-residue protein sequence, read N- to C-terminus: SV40 early leader protein (23 aa).

Positions 1 to 23 (MQRPRPPRPLSYSRSSEEAFLEA) are disordered.

Belongs to the polyomavirus early leader protein family.

Its function is as follows. May play a role in the lytic cycle. The protein is SV40 early leader protein of Macaca (macaques).